The chain runs to 202 residues: uncharacterized protein (202 aa).

The START domain maps to 1-202 (MRGILRMTVL…KGLRSAAEKR (202 aa)).

Functionally, may play a role in the interaction of the bacterium with animal cells. This is an uncharacterized protein from Pseudomonas aeruginosa (strain ATCC 15692 / DSM 22644 / CIP 104116 / JCM 14847 / LMG 12228 / 1C / PRS 101 / PAO1).